A 76-amino-acid chain; its full sequence is Defensin-like protein 163 (76 aa).

A signal peptide spans 1-27; that stretch reads MAKLIYSYLFISMFVLSVLLALPNAEG. 4 disulfide bridges follow: cysteine 33–cysteine 76, cysteine 43–cysteine 62, cysteine 48–cysteine 70, and cysteine 52–cysteine 72.

Belongs to the DEFL family.

It is found in the secreted. This Arabidopsis thaliana (Mouse-ear cress) protein is Defensin-like protein 163 (LCR24).